The sequence spans 187 residues: NADH-quinone oxidoreductase subunit B (187 aa).

Positions 1–10 are enriched in basic and acidic residues; it reads MTADHNRALH. Residues 1–22 form a disordered region; it reads MTADHNRALHDAPTARGGEVRQ. [4Fe-4S] cluster contacts are provided by C66, C67, C131, and C161.

The protein belongs to the complex I 20 kDa subunit family. NDH-1 is composed of 14 different subunits. Subunits NuoB, C, D, E, F, and G constitute the peripheral sector of the complex. The cofactor is [4Fe-4S] cluster.

It localises to the cell inner membrane. The enzyme catalyses a quinone + NADH + 5 H(+)(in) = a quinol + NAD(+) + 4 H(+)(out). In terms of biological role, NDH-1 shuttles electrons from NADH, via FMN and iron-sulfur (Fe-S) centers, to quinones in the respiratory chain. Couples the redox reaction to proton translocation (for every two electrons transferred, four hydrogen ions are translocated across the cytoplasmic membrane), and thus conserves the redox energy in a proton gradient. In Erythrobacter litoralis (strain HTCC2594), this protein is NADH-quinone oxidoreductase subunit B.